We begin with the raw amino-acid sequence, 351 residues long: UDP-N-acetylglucosamine--N-acetylmuramyl-(pentapeptide) pyrophosphoryl-undecaprenol N-acetylglucosamine transferase (351 aa).

Residues 13–15 (TGG), Asn-125, Arg-161, Ser-189, Ile-241, 260–265 (ALTVCE), and Gln-285 each bind UDP-N-acetyl-alpha-D-glucosamine.

The protein belongs to the glycosyltransferase 28 family. MurG subfamily.

The protein resides in the cell inner membrane. The enzyme catalyses di-trans,octa-cis-undecaprenyl diphospho-N-acetyl-alpha-D-muramoyl-L-alanyl-D-glutamyl-meso-2,6-diaminopimeloyl-D-alanyl-D-alanine + UDP-N-acetyl-alpha-D-glucosamine = di-trans,octa-cis-undecaprenyl diphospho-[N-acetyl-alpha-D-glucosaminyl-(1-&gt;4)]-N-acetyl-alpha-D-muramoyl-L-alanyl-D-glutamyl-meso-2,6-diaminopimeloyl-D-alanyl-D-alanine + UDP + H(+). It participates in cell wall biogenesis; peptidoglycan biosynthesis. Functionally, cell wall formation. Catalyzes the transfer of a GlcNAc subunit on undecaprenyl-pyrophosphoryl-MurNAc-pentapeptide (lipid intermediate I) to form undecaprenyl-pyrophosphoryl-MurNAc-(pentapeptide)GlcNAc (lipid intermediate II). The polypeptide is UDP-N-acetylglucosamine--N-acetylmuramyl-(pentapeptide) pyrophosphoryl-undecaprenol N-acetylglucosamine transferase (Haemophilus influenzae (strain 86-028NP)).